A 253-amino-acid polypeptide reads, in one-letter code: Ubiquinone/menaquinone biosynthesis C-methyltransferase UbiE (253 aa).

Residues threonine 76, aspartate 97, and 125–126 (DA) each bind S-adenosyl-L-methionine.

This sequence belongs to the class I-like SAM-binding methyltransferase superfamily. MenG/UbiE family.

The catalysed reaction is a 2-demethylmenaquinol + S-adenosyl-L-methionine = a menaquinol + S-adenosyl-L-homocysteine + H(+). It carries out the reaction a 2-methoxy-6-(all-trans-polyprenyl)benzene-1,4-diol + S-adenosyl-L-methionine = a 5-methoxy-2-methyl-3-(all-trans-polyprenyl)benzene-1,4-diol + S-adenosyl-L-homocysteine + H(+). Its pathway is quinol/quinone metabolism; menaquinone biosynthesis; menaquinol from 1,4-dihydroxy-2-naphthoate: step 2/2. The protein operates within cofactor biosynthesis; ubiquinone biosynthesis. In terms of biological role, methyltransferase required for the conversion of demethylmenaquinol (DMKH2) to menaquinol (MKH2) and the conversion of 2-polyprenyl-6-methoxy-1,4-benzoquinol (DDMQH2) to 2-polyprenyl-3-methyl-6-methoxy-1,4-benzoquinol (DMQH2). The chain is Ubiquinone/menaquinone biosynthesis C-methyltransferase UbiE from Azotobacter vinelandii (strain DJ / ATCC BAA-1303).